A 375-amino-acid chain; its full sequence is Succinyl-diaminopimelate desuccinylase (375 aa).

His66 contacts Zn(2+). Asp68 is an active-site residue. Residue Asp99 participates in Zn(2+) binding. Glu133 functions as the Proton acceptor in the catalytic mechanism. Positions 134, 162, and 348 each coordinate Zn(2+).

It belongs to the peptidase M20A family. DapE subfamily. Homodimer. Zn(2+) is required as a cofactor. The cofactor is Co(2+).

The catalysed reaction is N-succinyl-(2S,6S)-2,6-diaminopimelate + H2O = (2S,6S)-2,6-diaminopimelate + succinate. It participates in amino-acid biosynthesis; L-lysine biosynthesis via DAP pathway; LL-2,6-diaminopimelate from (S)-tetrahydrodipicolinate (succinylase route): step 3/3. In terms of biological role, catalyzes the hydrolysis of N-succinyl-L,L-diaminopimelic acid (SDAP), forming succinate and LL-2,6-diaminopimelate (DAP), an intermediate involved in the bacterial biosynthesis of lysine and meso-diaminopimelic acid, an essential component of bacterial cell walls. The polypeptide is Succinyl-diaminopimelate desuccinylase (Stenotrophomonas maltophilia (strain K279a)).